The sequence spans 216 residues: RNA pyrophosphohydrolase (216 aa).

The region spanning 6–149 is the Nudix hydrolase domain; that stretch reads GFRPNVGIIL…KRDVYQLALT (144 aa). Positions 38–59 match the Nudix box motif; sequence GGIKYGETPMQAMYRELHEETG. A disordered region spans residues 159 to 188; the sequence is AQRTDKSRGPRAPRYPRVANGHAASEAPAA.

This sequence belongs to the Nudix hydrolase family. RppH subfamily. The cofactor is a divalent metal cation.

Functionally, accelerates the degradation of transcripts by removing pyrophosphate from the 5'-end of triphosphorylated RNA, leading to a more labile monophosphorylated state that can stimulate subsequent ribonuclease cleavage. The polypeptide is RNA pyrophosphohydrolase (Burkholderia mallei (strain NCTC 10247)).